The primary structure comprises 149 residues: D-aminoacyl-tRNA deacylase (149 aa).

Positions 137 to 138 match the Gly-cisPro motif, important for rejection of L-amino acids motif; it reads GP.

This sequence belongs to the DTD family. In terms of assembly, homodimer.

The protein localises to the cytoplasm. It catalyses the reaction glycyl-tRNA(Ala) + H2O = tRNA(Ala) + glycine + H(+). The catalysed reaction is a D-aminoacyl-tRNA + H2O = a tRNA + a D-alpha-amino acid + H(+). Its function is as follows. An aminoacyl-tRNA editing enzyme that deacylates mischarged D-aminoacyl-tRNAs. Also deacylates mischarged glycyl-tRNA(Ala), protecting cells against glycine mischarging by AlaRS. Acts via tRNA-based rather than protein-based catalysis; rejects L-amino acids rather than detecting D-amino acids in the active site. By recycling D-aminoacyl-tRNA to D-amino acids and free tRNA molecules, this enzyme counteracts the toxicity associated with the formation of D-aminoacyl-tRNA entities in vivo and helps enforce protein L-homochirality. This is D-aminoacyl-tRNA deacylase from Clostridium kluyveri (strain ATCC 8527 / DSM 555 / NBRC 12016 / NCIMB 10680 / K1).